We begin with the raw amino-acid sequence, 89 residues long: Islet amyloid polypeptide (89 aa).

An N-terminal signal peptide occupies residues 1–22 (MCLLKLPVVLIVLLVALHHLKA). Positions 23–31 (TPIESNQVE) are excised as a propeptide. Residues cysteine 35 and cysteine 40 are joined by a disulfide bond. Tyrosine 70 bears the Tyrosine amide mark. Positions 74-89 (STVDILNREPLNYLPF) are excised as a propeptide.

The protein belongs to the calcitonin family. In terms of assembly, can form homodimers. Interacts with IDE and INS. Interaction with INS inhibits homodimerization and fibril formation.

It localises to the secreted. Its function is as follows. Amylin/IAPP is a glucoregulatory peptide hormone that plays an important role in the regulation of energy homeostasis. Selectively inhibits insulin-stimulated glucose utilization and glycogen deposition in muscle, while not affecting adipocyte glucose metabolism. IAPP function is mediated by the CALCR-RAMPs (AMYRs) receptor complexes. Amylin can also bind CALCR receptor in the absence of RAMPs, although it is more selective for AMYRs. The sequence is that of Islet amyloid polypeptide (IAPP) from Felis catus (Cat).